The following is a 67-amino-acid chain: DNA-directed RNA polymerase subunit omega (67 aa).

This sequence belongs to the RNA polymerase subunit omega family. In terms of assembly, the RNAP catalytic core consists of 2 alpha, 1 beta, 1 beta' and 1 omega subunit. When a sigma factor is associated with the core the holoenzyme is formed, which can initiate transcription.

It catalyses the reaction RNA(n) + a ribonucleoside 5'-triphosphate = RNA(n+1) + diphosphate. Functionally, promotes RNA polymerase assembly. Latches the N- and C-terminal regions of the beta' subunit thereby facilitating its interaction with the beta and alpha subunits. This is DNA-directed RNA polymerase subunit omega from Polynucleobacter asymbioticus (strain DSM 18221 / CIP 109841 / QLW-P1DMWA-1) (Polynucleobacter necessarius subsp. asymbioticus).